The primary structure comprises 477 residues: Xylose isomerase (477 aa).

His-142 is a catalytic residue. 7 residues coordinate Mn(2+): Glu-273, Glu-309, His-312, Asp-337, Asp-348, Asp-350, and Asp-380.

This sequence belongs to the xylose isomerase family. The cofactor is Mn(2+).

It catalyses the reaction alpha-D-xylose = alpha-D-xylulofuranose. The sequence is that of Xylose isomerase (XYLA) from Arabidopsis thaliana (Mouse-ear cress).